The chain runs to 1409 residues: DNA-directed RNA polymerase subunit beta' (1409 aa).

Zn(2+) contacts are provided by Cys-72, Cys-74, Cys-87, and Cys-90. Residues Asp-462, Asp-464, and Asp-466 each coordinate Mg(2+). 4 residues coordinate Zn(2+): Cys-816, Cys-890, Cys-897, and Cys-900.

Belongs to the RNA polymerase beta' chain family. The RNAP catalytic core consists of 2 alpha, 1 beta, 1 beta' and 1 omega subunit. When a sigma factor is associated with the core the holoenzyme is formed, which can initiate transcription. Mg(2+) serves as cofactor. Requires Zn(2+) as cofactor.

The enzyme catalyses RNA(n) + a ribonucleoside 5'-triphosphate = RNA(n+1) + diphosphate. In terms of biological role, DNA-dependent RNA polymerase catalyzes the transcription of DNA into RNA using the four ribonucleoside triphosphates as substrates. In Aromatoleum aromaticum (strain DSM 19018 / LMG 30748 / EbN1) (Azoarcus sp. (strain EbN1)), this protein is DNA-directed RNA polymerase subunit beta'.